Consider the following 310-residue polypeptide: Isoaspartyl peptidase/L-asparaginase (310 aa).

Thr167 functions as the Nucleophile in the catalytic mechanism. Residues 195-198 and 218-221 each bind substrate; these read RVGD and TGHG.

Belongs to the Ntn-hydrolase family. In terms of assembly, heterodimer of an alpha and beta chain produced by autocleavage. Post-translationally, cleaved into an alpha and beta chain by autocatalysis; this activates the enzyme. The N-terminal residue of the beta subunit is responsible for the nucleophile hydrolase activity.

The protein resides in the cytoplasm. It carries out the reaction L-asparagine + H2O = L-aspartate + NH4(+). The enzyme catalyses Cleavage of a beta-linked Asp residue from the N-terminus of a polypeptide.. Has both L-asparaginase and beta-aspartyl peptidase activity. Does not have aspartylglucosaminidase activity and is inactive toward GlcNAc-L-Asn. Likewise, has no activity toward glutamine. The sequence is that of Isoaspartyl peptidase/L-asparaginase (asrgl1) from Danio rerio (Zebrafish).